Here is a 308-residue protein sequence, read N- to C-terminus: Oxygen-dependent coproporphyrinogen-III oxidase (308 aa).

Residue serine 92 coordinates substrate. Positions 96 and 106 each coordinate a divalent metal cation. Residue histidine 106 is the Proton donor of the active site. A substrate-binding site is contributed by asparagine 108–arginine 110. Positions 145 and 175 each coordinate a divalent metal cation. The important for dimerization stretch occupies residues tyrosine 240 to glutamate 275. Substrate is bound at residue glycine 258–arginine 260.

Belongs to the aerobic coproporphyrinogen-III oxidase family. In terms of assembly, homodimer. A divalent metal cation serves as cofactor.

The protein localises to the cytoplasm. The catalysed reaction is coproporphyrinogen III + O2 + 2 H(+) = protoporphyrinogen IX + 2 CO2 + 2 H2O. Its pathway is porphyrin-containing compound metabolism; protoporphyrin-IX biosynthesis; protoporphyrinogen-IX from coproporphyrinogen-III (O2 route): step 1/1. Functionally, involved in the heme biosynthesis. Catalyzes the aerobic oxidative decarboxylation of propionate groups of rings A and B of coproporphyrinogen-III to yield the vinyl groups in protoporphyrinogen-IX. The sequence is that of Oxygen-dependent coproporphyrinogen-III oxidase from Salmonella paratyphi A (strain ATCC 9150 / SARB42).